A 99-amino-acid polypeptide reads, in one-letter code: Protein Frey (99 aa).

Residues 10 to 29 (YPRAGLSLFLFYLILAGALL) form a helical membrane-spanning segment. The interval 60-90 (DYGLRPKHPRPGGPRPLLSQAQQRKRDGPNM) is disordered.

As to quaternary structure, interacts with SPPL2C (via active sites); the interaction stabilizes FREY1 protein and inhibits SPPL2C proteolytic activity. Interacts with IZUMO1; the interaction retains IZUMO1 at the endoplasmic reticulum membrane and coordinates IZUMO1 complex assembly. As to expression, expressed in round spermatids (at protein level).

It localises to the endoplasmic reticulum membrane. Functionally, key regulator for male fertility expressed transiently in round spermatids where it recruits IZUMO1 at the endoplasmic reticulum (ER) membrane and coordinates the oolemmal binding multimeric complex (IZUMO1 complex) assembly. Upon complete assembly of the IZUMO1 complex, its ER retention is released, facilitating IZUMO1 complex export to the acrosome. Through the interaction with SPPL2C, inhibits its intramembrane protease activity directly accessing the catalytic center of an I-CLiP. The chain is Protein Frey from Mus musculus (Mouse).